We begin with the raw amino-acid sequence, 591 residues long: Beta-fructofuranosidase, insoluble isoenzyme CWINV4 (591 aa).

The signal sequence occupies residues 1-22 (MAISNVISVLLLLLVLINLSNQ). Residues 61 to 64 (WIND), Gln-80, Trp-88, and 123 to 124 (WS) contribute to the substrate site. Residue Asp-64 is part of the active site. 2 N-linked (GlcNAc...) asparagine glycosylation sites follow: Asn-145 and Asn-182. Residues 187–188 (RD), Glu-242, and Asp-276 contribute to the substrate site. N-linked (GlcNAc...) asparagine glycans are attached at residues Asn-336, Asn-472, and Asn-565. The cysteines at positions 436 and 484 are disulfide-linked.

The protein belongs to the glycosyl hydrolase 32 family. As to expression, expressed in flowers, and seeds, and, to a lower extent, in seedlings.

The protein localises to the secreted. It localises to the extracellular space. Its subcellular location is the apoplast. The protein resides in the cell wall. The enzyme catalyses Hydrolysis of terminal non-reducing beta-D-fructofuranoside residues in beta-D-fructofuranosides.. The polypeptide is Beta-fructofuranosidase, insoluble isoenzyme CWINV4 (CWINV4) (Arabidopsis thaliana (Mouse-ear cress)).